A 148-amino-acid chain; its full sequence is uncharacterized protein (148 aa).

A signal peptide spans 1–23; the sequence is MKALVAVSAVAVVALLGVSSAQA. The tract at residues 22–45 is disordered; the sequence is QADPEADPGAGEANYGGPPSSPRL.

The protein to M.leprae ML2452.

This is an uncharacterized protein from Mycobacterium bovis (strain ATCC BAA-935 / AF2122/97).